Consider the following 549-residue polypeptide: Protein wntless homolog (549 aa).

A signal peptide spans 1–34 (MAGGAVIENLSNRKLFVIFAGLLVIQIMFFLIGA). At 36–236 (YAPSPSSYME…RLIEIHQNGG (201 aa)) the chain is on the lumenal side. The chain crosses the membrane as a helical span at residues 237–257 (FTLVWLWTKTFMTPVVAICLW). The Cytoplasmic segment spans residues 258-275 (WYYNRINQLARNPLLLER). The chain crosses the membrane as a helical span at residues 276–296 (AILLLGLSLVILDFPIEWISL). Topologically, residues 297 to 310 (TYRIPFLLLISDLR) are lumenal. The helical transmembrane segment at 311–331 (QGLFYTVLFSFWLIFAGEHLI) threads the bilayer. Topologically, residues 332-345 (DDNTRNNLKSYRFN) are cytoplasmic. Residues 346-366 (LSFIITASLGLLIYDLIERGI) traverse the membrane as a helical segment. Residues 367 to 383 (QLYDPFYSVWSSPTGSQ) are Lumenal-facing. Residues 384 to 404 (IAYFAIFISAISTVAYFIFLF) traverse the membrane as a helical segment. Topologically, residues 405–439 (FKIARVWSTIKSKRSAQIYQTSENRRLKVEGVIYR) are cytoplasmic. Residues 440-460 (FKFLMLFTLLCSAFTIAAYFM) form a helical membrane-spanning segment. At 461-483 (KQYGEAQLHGDEARDGFLTGSTS) the chain is on the lumenal side. A helical transmembrane segment spans residues 484–504 (AFFTGAFGMCNIYVLLLLAMY). Topologically, residues 505 to 549 (APSHKHYRGASQLIDENDDDEIMEDPSNQHTESNAMTTFLKPSTD) are cytoplasmic. The disordered stretch occupies residues 524–549 (DEIMEDPSNQHTESNAMTTFLKPSTD). Positions 530-549 (PSNQHTESNAMTTFLKPSTD) are enriched in polar residues.

Belongs to the wntless family. In terms of tissue distribution, expressed in the tail hypodermis, stomatointestinal muscle, the mesoblast cell M and its descendants, CAN neurons, the developing vulva, the pharynx and the pharyngeal intestinal valve.

It is found in the cell membrane. Its subcellular location is the early endosome membrane. It localises to the golgi apparatus membrane. The protein resides in the basal cell membrane. The protein localises to the late endosome membrane. Functionally, probable sorting receptor which regulates endocytosis and secretion of the wnt ligand egl-20. Recycling of mig-14 from the plasma membrane to the Golgi apparatus by the retromer complex is essential for its function. Its endosomal trafficking is regulated by its association with sorting nexin snx-3 on early endosomes and the mtm-6/mtm-9 myotubularin complex. Required in embryonic development for endoderm specification and the correct positioning and orientation of the mitotic spindles and division planes in blastomere cells. Functions during vulval development, playing a role in vulval precursor cell fate specification. During development, specifically regulates the migration of HSN neurons, the left Q neuroblast (QL) and its descendants and the distal tip cells of the gonads. Positioning of Q neuroblasts may be both dependent and independent of hox gene mab-5. Involved in establishing ALM and PLM neuronal cell polarity. This Caenorhabditis elegans protein is Protein wntless homolog.